The following is a 613-amino-acid chain: Leucine-rich repeat receptor-like protein FASCIATED EAR2 (613 aa).

Positions 1–28 (MLTATPLPHQLLATFLLVLASATQPAVP) are cleaved as a signal peptide. Topologically, residues 29 to 573 (ASTDRAALLA…WLGGWHGENG (545 aa)) are extracellular. LRR repeat units lie at residues 79-103 (TPSV…PLAL), 104-128 (LRRL…LPRS), 130-150 (LALD…LPSS), 151-176 (LPAL…SFPA), 178-199 (LAAL…IVAD), 202-226 (NSAL…IAAV), 227-250 (RSLQ…IGNL), 251-274 (TYLQ…LAGC), 276-297 (QLLY…ELDA), 298-322 (LASL…LAGC), 324-346 (SLEV…VAKW), 347-370 (LSLK…MFSF), 372-394 (LLQW…GFNV), 435-459 (VQAT…LVDM), 460-483 (KGLE…LGGM), 484-507 (GRLH…IAAM), and 508-531 (TVLE…KFPG). Residue N91 is glycosylated (N-linked (GlcNAc...) asparagine). N-linked (GlcNAc...) asparagine glycosylation is present at N158. A glycan (N-linked (GlcNAc...) asparagine) is linked at N249. N-linked (GlcNAc...) asparagine glycosylation occurs at N393. N466 carries an N-linked (GlcNAc...) asparagine glycan. A glycan (N-linked (GlcNAc...) asparagine) is linked at N514. The helical transmembrane segment at 574-597 (WVSLGAFCISTMTSFYVSLATLLC) threads the bilayer. At 598–613 (SSNARNFVFRPVRVEY) the chain is on the cytoplasmic side.

In terms of tissue distribution, expressed in ear primordia, vegetative apex and young leaf tissues. Barely detected in expanded leaf tissues and not expressed in roots.

It is found in the cell membrane. Its function is as follows. Receptor-like protein that regulates shoot meristem proliferation. Based on additive and synergistic phenotypes of double mutants, it is probable that unlike CLV1 and CLV2 in A.thaliana, FAE2 and TD1 do not function exclusively in a single pathway. This chain is Leucine-rich repeat receptor-like protein FASCIATED EAR2 (FEA2), found in Zea mays (Maize).